Here is a 399-residue protein sequence, read N- to C-terminus: Phosphoglycerate kinase (399 aa).

Residues 22–24 (DFN), arginine 38, 61–64 (HLGR), arginine 120, and arginine 153 contribute to the substrate site. ATP is bound by residues lysine 204, glutamate 326, and 352–355 (GGDT).

Belongs to the phosphoglycerate kinase family. Monomer.

The protein localises to the cytoplasm. It carries out the reaction (2R)-3-phosphoglycerate + ATP = (2R)-3-phospho-glyceroyl phosphate + ADP. It participates in carbohydrate degradation; glycolysis; pyruvate from D-glyceraldehyde 3-phosphate: step 2/5. The sequence is that of Phosphoglycerate kinase from Geotalea uraniireducens (strain Rf4) (Geobacter uraniireducens).